A 160-amino-acid chain; its full sequence is uncharacterized protein (160 aa).

Residues Cys-26, Cys-28, Cys-50, and His-61 each coordinate Zn(2+). The GRF-type; atypical zinc finger occupies 26 to 69; the sequence is CWCGEEIITFTSKTKENPYRRFYRCAIAMKRENEEHLFKWVDEA.

This is an uncharacterized protein from Arabidopsis thaliana (Mouse-ear cress).